Consider the following 342-residue polypeptide: Protein pelota homolog (342 aa).

The protein belongs to the eukaryotic release factor 1 family. Pelota subfamily. As to quaternary structure, monomer. A divalent metal cation is required as a cofactor.

It is found in the cytoplasm. May function in recognizing stalled ribosomes, interact with stem-loop structures in stalled mRNA molecules, and effect endonucleolytic cleavage of the mRNA. May play a role in the release non-functional ribosomes and degradation of damaged mRNAs. Has endoribonuclease activity. The chain is Protein pelota homolog from Methanocorpusculum labreanum (strain ATCC 43576 / DSM 4855 / Z).